The sequence spans 172 residues: Ribosomally synthesized cyclic peptide phomopsin precursor phomA (172 aa).

The signal sequence occupies residues 1–18 (MRFTPAIVIAAFCSLAVA). Propeptides lie at residues 19 to 35 (APAAKAIARSPSEAVED), 42 to 50 (KKRGEAVED), 57 to 65 (KKRGEAVED), 72 to 79 (KRGEAVED), 86 to 93 (KRGEAVED), 100 to 108 (KKRGEAVED), 115 to 122 (KRGEAVED), 129 to 137 (RKRGEAVED), 144 to 151 (KRGEAVED), 158 to 165 (KRGEAVED), and Lys172.

Post-translationally, phomA is processed by several endopeptidases including kexin proteases as well as the cluster-specific S41 family peptidase phomP1 and the oligopeptidase phomG to produce 10 identical copies of the hexapeptide Tyr-Val-Ile-Pro-Ile-Asp, that is further modified to yield phomapsins. The timing and order of proteolysis of the phomA precursor and PTMs are still unknown. Two tyrosinase-like enzymes, phomQ1 and phomQ2, catalyze the chlorination and hydroxylation of Tyr, respectively. PhomYb, is proposed to be involved in the construction of the macrocyclic structure. The other 4 ustYa family proteins may be involved in PTMs that generate the unique structure of phomopsin A. PhomYa is required for the hydroxylation of C-beta of Tyr. PhomYc, phomYd, and phomYe are responsible for the biosynthesis of 2,3-dehydroisoleucine (dIle), 2,3-dehydroaspartic acid (dAsp), and 3,4-dehydroproline (dPro), respectively. While dIle formation by phomYc is indispensable for the installation of dAsp by phomYd, the order of the other PTMs have not been elucidated yet. Most of the biosynthetic enzymes likely have broad substrate specificity, and thus, there might be a metabolic grid from a precursor to phomopsin A. The enzyme(s) responsible for the biosynthesis of 3,4-dehydrovaline (dVal) have also not been identified yet. Finally, phomM acts as an S-adenosylmethionine-dependent alpha-N-methyltransferase that catalyzes two successive N-methylation reactions, converting N-desmethyl-phomopsin A to phomopsin A and phomopsin A further to an N,N-dimethylated congener called phomopsin E.

Its pathway is mycotoxin biosynthesis. Functionally, ribosomally synthesized cyclic peptide phomopsin precursor; part of the gene cluster that mediates the biosynthesis of the phomopsins, a group of hexapeptide mycotoxins which infects lupins and causes lupinosis disease in livestock. The phomA translated product contains a 10-fold repeated peptide embedding the hexapeptide Tyr-Val-Ile-Pro-Ile-Asp, that is converted into phomapsins. After being excised from the precursor peptide by kexin proteases, the core peptides are cyclized and modified post-translationally by enzymes encoded within the corresponding gene cluster. The sequence is that of Ribosomally synthesized cyclic peptide phomopsin precursor phomA from Diaporthe leptostromiformis (Lupinosis disease fungus).